The following is a 39-amino-acid chain: Cytochrome b559 subunit beta (39 aa).

A helical transmembrane segment spans residues 14 to 30 (WLAVHGLAVPTVFFLGS). His18 is a heme binding site.

The protein belongs to the PsbE/PsbF family. In terms of assembly, heterodimer of an alpha subunit and a beta subunit. PSII is composed of 1 copy each of membrane proteins PsbA, PsbB, PsbC, PsbD, PsbE, PsbF, PsbH, PsbI, PsbJ, PsbK, PsbL, PsbM, PsbT, PsbX, PsbY, PsbZ, Psb30/Ycf12, at least 3 peripheral proteins of the oxygen-evolving complex and a large number of cofactors. It forms dimeric complexes. It depends on heme b as a cofactor.

It localises to the plastid. Its subcellular location is the chloroplast thylakoid membrane. In terms of biological role, this b-type cytochrome is tightly associated with the reaction center of photosystem II (PSII). PSII is a light-driven water:plastoquinone oxidoreductase that uses light energy to abstract electrons from H(2)O, generating O(2) and a proton gradient subsequently used for ATP formation. It consists of a core antenna complex that captures photons, and an electron transfer chain that converts photonic excitation into a charge separation. The sequence is that of Cytochrome b559 subunit beta from Welwitschia mirabilis (Tree tumbo).